The chain runs to 390 residues: 1-deoxy-D-xylulose 5-phosphate reductoisomerase (390 aa).

NADPH contacts are provided by T10, G11, S12, I13, A36, K37, N38, and N122. A 1-deoxy-D-xylulose 5-phosphate-binding site is contributed by K123. E124 is an NADPH binding site. Position 148 (D148) interacts with Mn(2+). 1-deoxy-D-xylulose 5-phosphate is bound by residues S149, E150, S174, and H197. E150 provides a ligand contact to Mn(2+). G203 provides a ligand contact to NADPH. S210, N215, K216, and E219 together coordinate 1-deoxy-D-xylulose 5-phosphate. E219 contacts Mn(2+).

The protein belongs to the DXR family. The cofactor is Mg(2+). Requires Mn(2+) as cofactor.

The enzyme catalyses 2-C-methyl-D-erythritol 4-phosphate + NADP(+) = 1-deoxy-D-xylulose 5-phosphate + NADPH + H(+). It functions in the pathway isoprenoid biosynthesis; isopentenyl diphosphate biosynthesis via DXP pathway; isopentenyl diphosphate from 1-deoxy-D-xylulose 5-phosphate: step 1/6. In terms of biological role, catalyzes the NADPH-dependent rearrangement and reduction of 1-deoxy-D-xylulose-5-phosphate (DXP) to 2-C-methyl-D-erythritol 4-phosphate (MEP). This Trichlorobacter lovleyi (strain ATCC BAA-1151 / DSM 17278 / SZ) (Geobacter lovleyi) protein is 1-deoxy-D-xylulose 5-phosphate reductoisomerase.